We begin with the raw amino-acid sequence, 765 residues long: Phosphoribosylformylglycinamidine synthase subunit PurL (765 aa).

The active site involves H59. ATP is bound by residues Y62 and K104. Residue E106 coordinates Mg(2+). Substrate-binding positions include 107 to 110 and R129; that span reads SHNH. H108 acts as the Proton acceptor in catalysis. D130 serves as a coordination point for Mg(2+). Q254 lines the substrate pocket. D282 provides a ligand contact to Mg(2+). 326-328 contributes to the substrate binding site; that stretch reads ESQ. Positions 522 and 559 each coordinate ATP. N560 contacts Mg(2+). Substrate is bound at residue S562.

The protein belongs to the FGAMS family. In terms of assembly, monomer. Part of the FGAM synthase complex composed of 1 PurL, 1 PurQ and 2 PurS subunits.

It is found in the cytoplasm. The catalysed reaction is N(2)-formyl-N(1)-(5-phospho-beta-D-ribosyl)glycinamide + L-glutamine + ATP + H2O = 2-formamido-N(1)-(5-O-phospho-beta-D-ribosyl)acetamidine + L-glutamate + ADP + phosphate + H(+). Its pathway is purine metabolism; IMP biosynthesis via de novo pathway; 5-amino-1-(5-phospho-D-ribosyl)imidazole from N(2)-formyl-N(1)-(5-phospho-D-ribosyl)glycinamide: step 1/2. Part of the phosphoribosylformylglycinamidine synthase complex involved in the purines biosynthetic pathway. Catalyzes the ATP-dependent conversion of formylglycinamide ribonucleotide (FGAR) and glutamine to yield formylglycinamidine ribonucleotide (FGAM) and glutamate. The FGAM synthase complex is composed of three subunits. PurQ produces an ammonia molecule by converting glutamine to glutamate. PurL transfers the ammonia molecule to FGAR to form FGAM in an ATP-dependent manner. PurS interacts with PurQ and PurL and is thought to assist in the transfer of the ammonia molecule from PurQ to PurL. The chain is Phosphoribosylformylglycinamidine synthase subunit PurL from Thermobifida fusca (strain YX).